Reading from the N-terminus, the 546-residue chain is Alpha-taxilin (546 aa).

Disordered regions lie at residues 1-170 and 482-546; these read MKNQ…GLGK and NKRV…SARA. Positions 11–21 are enriched in polar residues; sequence AKQSNPKSSPG. 2 stretches are compositionally biased toward basic and acidic residues: residues 70–80 and 143–158; these read DVSEELSRQLE and EEIR…DHRR. Ser-72 bears the Phosphoserine mark. The stretch at 186-491 forms a coiled coil; that stretch reads EEKLAALCKK…NKRVQDLSAG (306 aa). Phosphoserine is present on Ser-515. Positions 530 to 546 are enriched in polar residues; sequence TEASGQTGPQEPTSARA.

The protein belongs to the taxilin family. In terms of assembly, binds to the C-terminal coiled coil region of syntaxin family members STX1A, STX3A and STX4A, but not when these proteins are complexed with SNAP25, VAMP2 or STXBP1, suggesting that it interacts with syntaxins that do not form the SNARE complex. As to expression, ubiquitous, with much higher expression in heart, kidney, liver and pancreas.

Its function is as follows. May be involved in intracellular vesicle traffic and potentially in calcium-dependent exocytosis in neuroendocrine cells. In Homo sapiens (Human), this protein is Alpha-taxilin (TXLNA).